A 361-amino-acid polypeptide reads, in one-letter code: Histidinol-phosphate aminotransferase (361 aa).

Lys-219 is subject to N6-(pyridoxal phosphate)lysine.

The protein belongs to the class-II pyridoxal-phosphate-dependent aminotransferase family. Histidinol-phosphate aminotransferase subfamily. As to quaternary structure, homodimer. The cofactor is pyridoxal 5'-phosphate.

It catalyses the reaction L-histidinol phosphate + 2-oxoglutarate = 3-(imidazol-4-yl)-2-oxopropyl phosphate + L-glutamate. It participates in amino-acid biosynthesis; L-histidine biosynthesis; L-histidine from 5-phospho-alpha-D-ribose 1-diphosphate: step 7/9. This chain is Histidinol-phosphate aminotransferase, found in Acinetobacter baumannii (strain ACICU).